A 239-amino-acid chain; its full sequence is DNA repair protein RecO (239 aa).

This sequence belongs to the RecO family.

Its function is as follows. Involved in DNA repair and RecF pathway recombination. In Bifidobacterium animalis subsp. lactis (strain AD011), this protein is DNA repair protein RecO.